A 551-amino-acid chain; its full sequence is Tetrachloroethene reductive dehalogenase (551 aa).

Positions M1–A39 form a signal peptide, tat-type signal. The 4Fe-4S ferredoxin-type 1 domain occupies P411–D440. Residues C420, C423, C426, C430, C467, C478, C481, and C485 each coordinate [4Fe-4S] cluster. A 4Fe-4S ferredoxin-type 2 domain is found at C478–D496.

Belongs to the PceA family. [4Fe-4S] cluster serves as cofactor. It depends on corrinoid as a cofactor. In terms of processing, predicted to be exported by the Tat system. The position of the signal peptide cleavage has not been experimentally proven.

Its subcellular location is the cell membrane. It carries out the reaction trichloroethene + chloride + A + H(+) = tetrachloroethene + AH2. The catalysed reaction is trichloroethene + AH2 = (Z)-1,2-dichloroethene + chloride + A + H(+). Functionally, catalyzes the reductive dechlorination of tetrachloroethene (PCE) to trichloroethene (TCE) and of trichloroethene to cis-1,2-dichloroethene (DCE). This Desulfitobacterium hafniense (Desulfitobacterium frappieri) protein is Tetrachloroethene reductive dehalogenase.